A 517-amino-acid polypeptide reads, in one-letter code: Shugoshin 1 (517 aa).

Residues 1-89 adopt a coiled-coil conformation; that stretch reads MAKERCQKRS…DVILQLRKEC (89 aa). Residues 1–176 are necessary for interaction with PPP2CA and PPP2R1A; it reads MAKERCQKRS…DFDSGKVEST (176 aa). 4 disordered regions span residues 107 to 136, 149 to 173, 267 to 317, and 334 to 427; these read QSEE…LSGK, PYQT…SGKV, PEQI…TLDG, and HPTP…QESP. A coiled-coil region spans residues 268–291; it reads EQIESKHKRARKRRAEQRRTKQRC. Residues 273–302 are compositionally biased toward basic residues; it reads KHKRARKRRAEQRRTKQRCKSKSSLRSKGN. The segment covering 341-363 has biased composition (polar residues); sequence KMNNGCNKETDSSNSEVSDLECS. Basic and acidic residues predominate over residues 379-390; sequence RLRDYRESERAV. Phosphoserine is present on Ser-426. A PXVXL/I motif motif is present at residues 441–445; that stretch reads PRVKI. The D-box signature appears at 447-455; that stretch reads KPSLPPKRR. Residue Ser-497 is modified to Phosphoserine; by NEK2.

The protein belongs to the shugoshin family. As to quaternary structure, interacts with PPP2CA (or PPP2CB), PPP2R1B, PPP2R5A, PPP2R5B, PPP2R5C, PPP2R5D, PPP2R5E, SET, LRRC59, RBM10 (or RBM5), RPL10A, RPL28, RPL7, RPL7A and RPLP1. Interaction with protein phosphatase 2A occurs most probably through direct binding to the regulatory B56 subunits: PPP2R1B, PPP2R5A, PPP2R5B, PPP2R5C, PPP2R5D, PPP2R5E. Interacts with PPP2R1A and NEK2. Interacts with CDCA8. Post-translationally, ubiquitinated and degraded during mitotic exit by APC/C-Cdh1. In terms of processing, phosphorylation by NEK2 is essential for chromosome congression in mitosis and for the proper attachment of spindle microtubule to the kinetochore. Phosphorylated by PLK1 and AUKRB. As to expression, ubiquitously expressed in proliferating cells. Moderately expressed in the oocytes.

The protein localises to the nucleus. It is found in the chromosome. Its subcellular location is the centromere. It localises to the kinetochore. The protein resides in the cytoplasm. The protein localises to the cytoskeleton. It is found in the spindle pole. Its subcellular location is the microtubule organizing center. It localises to the centrosome. The protein resides in the nucleus speckle. Its function is as follows. Plays a central role in chromosome cohesion during mitosis by preventing premature dissociation of cohesin complex from centromeres after prophase, when most of cohesin complex dissociates from chromosomes arms. May act by preventing phosphorylation of the STAG2 subunit of cohesin complex at the centromere, ensuring cohesin persistence at centromere until cohesin cleavage by ESPL1/separase at anaphase. Essential for proper chromosome segregation during mitosis and this function requires interaction with PPP2R1A. Its phosphorylated form is necessary for chromosome congression and for the proper attachment of spindle microtubule to the kinetochore. Necessary for kinetochore localization of PLK1 and CENPF. May play a role in the tension sensing mechanism of the spindle-assembly checkpoint by regulating PLK1 kinetochore affinity. Involved in centromeric enrichment of AUKRB in prometaphase. The sequence is that of Shugoshin 1 from Mus musculus (Mouse).